We begin with the raw amino-acid sequence, 271 residues long: Ribosomal RNA small subunit methyltransferase A (271 aa).

Residues asparagine 19, leucine 21, glycine 46, glutamate 67, aspartate 92, and asparagine 113 each contribute to the S-adenosyl-L-methionine site.

This sequence belongs to the class I-like SAM-binding methyltransferase superfamily. rRNA adenine N(6)-methyltransferase family. RsmA subfamily.

It localises to the cytoplasm. The enzyme catalyses adenosine(1518)/adenosine(1519) in 16S rRNA + 4 S-adenosyl-L-methionine = N(6)-dimethyladenosine(1518)/N(6)-dimethyladenosine(1519) in 16S rRNA + 4 S-adenosyl-L-homocysteine + 4 H(+). In terms of biological role, specifically dimethylates two adjacent adenosines (A1518 and A1519) in the loop of a conserved hairpin near the 3'-end of 16S rRNA in the 30S particle. May play a critical role in biogenesis of 30S subunits. The protein is Ribosomal RNA small subunit methyltransferase A of Photobacterium profundum (strain SS9).